Here is a 476-residue protein sequence, read N- to C-terminus: Membrane-bound lytic murein transglycosylase F (476 aa).

Residues 1 to 15 (MRSFLLILFCVSLLT) form the signal peptide. The segment at 16–258 (GCQGERVDAA…HLNEKYFAHV (243 aa)) is non-LT domain. Residues 259 to 476 (KRFDYVDTRA…QSEISAAQPN (218 aa)) are LT domain. E303 is a catalytic residue. The tract at residues 456-476 (EAQQQTAEKQSQSEISAAQPN) is disordered.

It in the N-terminal section; belongs to the bacterial solute-binding protein 3 family. In the C-terminal section; belongs to the transglycosylase Slt family.

The protein resides in the cell outer membrane. It carries out the reaction Exolytic cleavage of the (1-&gt;4)-beta-glycosidic linkage between N-acetylmuramic acid (MurNAc) and N-acetylglucosamine (GlcNAc) residues in peptidoglycan, from either the reducing or the non-reducing ends of the peptidoglycan chains, with concomitant formation of a 1,6-anhydrobond in the MurNAc residue.. Its function is as follows. Murein-degrading enzyme that degrades murein glycan strands and insoluble, high-molecular weight murein sacculi, with the concomitant formation of a 1,6-anhydromuramoyl product. Lytic transglycosylases (LTs) play an integral role in the metabolism of the peptidoglycan (PG) sacculus. Their lytic action creates space within the PG sacculus to allow for its expansion as well as for the insertion of various structures such as secretion systems and flagella. The sequence is that of Membrane-bound lytic murein transglycosylase F from Shewanella loihica (strain ATCC BAA-1088 / PV-4).